The primary structure comprises 302 residues: Cuticle collagen dpy-13 (302 aa).

Triple-helical region stretches follow at residues 106–135 (GPQGAPGAPGKPGRPGKPGAPGFPGNPGKA), 154–210 (GPPG…EGLP), and 219–278 (GEPG…PGTP). Positions 108-284 (QGAPGAPGKP…PGTPGERGIC (177 aa)) are disordered. Positions 144–159 (TPPPCKPCPQGPPGAP) are enriched in pro residues. The segment covering 188–197 (PKGPNGAPGK) has biased composition (low complexity). 2 stretches are compositionally biased toward pro residues: residues 247–257 (QPGPKGPPGPD) and 268–277 (QPGPVGPPGT).

Belongs to the cuticular collagen family. As to quaternary structure, collagen polypeptide chains are complexed within the cuticle by disulfide bonds and other types of covalent cross-links.

Functionally, nematode cuticles are composed largely of collagen-like proteins. The cuticle functions both as an exoskeleton and as a barrier to protect the worm from its environment. Mutations in dpy-13 affects the body shape. This chain is Cuticle collagen dpy-13 (dpy-13), found in Caenorhabditis elegans.